Here is a 458-residue protein sequence, read N- to C-terminus: uncharacterized protein (458 aa).

This is an uncharacterized protein from Bacillus subtilis (strain 168).